The sequence spans 798 residues: ATP-dependent RecD2 DNA helicase (798 aa).

Residue 370 to 374 (GTGKT) participates in ATP binding.

This sequence belongs to the RecD family. RecD2 subfamily. Interacts with SSB (sbbA).

The protein localises to the cytoplasm. It localises to the nucleoid. The enzyme catalyses Couples ATP hydrolysis with the unwinding of duplex DNA at the replication fork by translocating in the 5'-3' direction. This creates two antiparallel DNA single strands (ssDNA). The leading ssDNA polymer is the template for DNA polymerase III holoenzyme which synthesizes a continuous strand.. It catalyses the reaction ATP + H2O = ADP + phosphate + H(+). In terms of biological role, in vivo may favor replication restart by preventing RecA from binding to blocked replication forks, avoiding unnecessary recombination during replication restart. Acts as a negative modulator of the RecA-ssDNA filament, may dissasemble RecA threads, can act as both a positive and negative regulator of strand exchange. Probably stabilizes or aids normal replication fork progression, is important for survival after treatment with DNA-damaging agents that can result in replication fork stress. Overcomes the inhibition of replication restart by RecA/RecO, probably by displacing RecA. Increasing levels inhibit PriA-dependent DNA replication initiation (but have little effect on ongoing replication) in vitro; may act by disturbing SsbA assembly. Probably has a role in recombinational DNA repair. Does not seem to contribute to mismatch repair. Has 5'-3' helicase activity that is probably ATP-dependent. The polypeptide is ATP-dependent RecD2 DNA helicase (Bacillus subtilis (strain 168)).